A 207-amino-acid polypeptide reads, in one-letter code: Gap junction epsilon-1 protein (207 aa).

Residues 1–22 (MSLNYIKNFYEGCLRPPTVIGQ) are Cytoplasmic-facing. The helical transmembrane segment at 23 to 43 (FHTLFFGSVRTFFLGVLGFAV) threads the bilayer. Residues 44 to 74 (YGNEALHFSCDPDKRELNLYCYNQFRPITPQ) lie on the Extracellular side of the membrane. Intrachain disulfides connect cysteine 53/cysteine 161 and cysteine 64/cysteine 147. A helical membrane pass occupies residues 75–95 (VFWALQLVTVLVPGAVFHLYA). At 96 to 111 (ACKNIDQEEILHRPMS) the chain is on the cytoplasmic side. Residues 112–132 (TVFYIISVLLRIILEVLAFWL) traverse the membrane as a helical segment. Residues 133-175 (QSHLFGFLVDPIFMCDVTGLGKILNVSKCMVPEHFEKTIFLSA) lie on the Extracellular side of the membrane. Residues 176 to 196 (MYTFTIITILLCIAEIFEILF) form a helical membrane-spanning segment. Residues 197–207 (RRLGYLNQPMT) lie on the Cytoplasmic side of the membrane.

It belongs to the connexin family. Beta-type (group I) subfamily. As to quaternary structure, a connexon is composed of a hexamer of connexins.

It is found in the cell membrane. In terms of biological role, has significant hemichannel activity. However, has only low-efficiency gap junction activity and probably does not function as a gap junction channel in vivo. This chain is Gap junction epsilon-1 protein, found in Danio rerio (Zebrafish).